The chain runs to 404 residues: Voltage-gated potassium channel subunit beta-3 (404 aa).

Over residues 1-14 (MQVSIACTEQNLRS) the composition is skewed to polar residues. The interval 1 to 78 (MQVSIACTEQ…RESTGRGTGM (78 aa)) is disordered. The segment covering 28–50 (PGGGNGGPVGGGHGNPPGGGGLG) has biased composition (gly residues). Thr97, Trp98, Gln104, and Asp126 together coordinate NADP(+). Tyr131 serves as the catalytic Proton donor/acceptor. NADP(+) is bound by residues Asn199, Ser229, Arg230, Gln255, Trp284, Ser285, Pro286, Leu287, Ala288, Cys289, Lys295, Lys305, Gly364, Ser366, Gln370, and Glu373.

The protein belongs to the shaker potassium channel beta subunit family. As to quaternary structure, forms heteromultimeric complex with alpha subunits. Interacts with KCNA5 and KCNB2. Predominantly expressed in brain. Strongest expression in olfactory bulb and thalamic nuclei. Not detected in heart, spleen, lung, liver, skeletal muscle, kidney and testis.

It localises to the cytoplasm. In terms of biological role, regulatory subunit of the voltage-gated potassium (Kv) channels composed of pore-forming and potassium-conducting alpha subunits and of regulatory beta subunits. The beta-3/KCNAB3 subunit may mediate closure of potassium channels. Inactivates Kv1.4/KCNA4 alpha subunit-containing Kv channel current but not Kv1.1/KCNA1 or Kv1.5/KCNA5 channels. May display nicotinamide adenine dinucleotide phosphate (NADPH)-dependent aldoketoreductase activity. The binding of oxidized and reduced NADP(H) cofactors may be required for the regulation of potassium channel activity. The polypeptide is Voltage-gated potassium channel subunit beta-3 (Rattus norvegicus (Rat)).